Reading from the N-terminus, the 66-residue chain is Large ribosomal subunit protein uL29 (66 aa).

Belongs to the universal ribosomal protein uL29 family.

This chain is Large ribosomal subunit protein uL29, found in Nitrosococcus oceani (strain ATCC 19707 / BCRC 17464 / JCM 30415 / NCIMB 11848 / C-107).